We begin with the raw amino-acid sequence, 101 residues long: Aspartyl/glutamyl-tRNA(Asn/Gln) amidotransferase subunit C (101 aa).

Belongs to the GatC family. In terms of assembly, heterotrimer of A, B and C subunits.

The catalysed reaction is L-glutamyl-tRNA(Gln) + L-glutamine + ATP + H2O = L-glutaminyl-tRNA(Gln) + L-glutamate + ADP + phosphate + H(+). It carries out the reaction L-aspartyl-tRNA(Asn) + L-glutamine + ATP + H2O = L-asparaginyl-tRNA(Asn) + L-glutamate + ADP + phosphate + 2 H(+). In terms of biological role, allows the formation of correctly charged Asn-tRNA(Asn) or Gln-tRNA(Gln) through the transamidation of misacylated Asp-tRNA(Asn) or Glu-tRNA(Gln) in organisms which lack either or both of asparaginyl-tRNA or glutaminyl-tRNA synthetases. The reaction takes place in the presence of glutamine and ATP through an activated phospho-Asp-tRNA(Asn) or phospho-Glu-tRNA(Gln). This is Aspartyl/glutamyl-tRNA(Asn/Gln) amidotransferase subunit C from Lactococcus lactis subsp. cremoris (strain SK11).